Consider the following 106-residue polypeptide: Large ribosomal subunit protein bL21 (106 aa).

This sequence belongs to the bacterial ribosomal protein bL21 family. As to quaternary structure, part of the 50S ribosomal subunit. Contacts protein L20.

In terms of biological role, this protein binds to 23S rRNA in the presence of protein L20. The sequence is that of Large ribosomal subunit protein bL21 from Xanthomonas euvesicatoria pv. vesicatoria (strain 85-10) (Xanthomonas campestris pv. vesicatoria).